We begin with the raw amino-acid sequence, 219 residues long: Proteasome subunit beta type-9 (219 aa).

Positions 1-20 are cleaved as a propeptide — removed in mature form; the sequence is MLQAGAPTAGSFRTGEVHTG. The active-site Nucleophile is the T21. Residues K53 and K109 each carry the N6-acetyllysine modification.

This sequence belongs to the peptidase T1B family. As to quaternary structure, the 26S proteasome consists of a 20S proteasome core and two 19S regulatory subunits. The 20S proteasome core is composed of 28 subunits that are arranged in four stacked rings, resulting in a barrel-shaped structure. The two end rings are each formed by seven alpha subunits, and the two central rings are each formed by seven beta subunits. The catalytic chamber with the active sites is on the inside of the barrel. Component of the immunoproteasome, where it displaces the equivalent housekeeping subunit PSMB6. Component of the spermatoproteasome, a form of the proteasome specifically found in testis. Interacts with NCOA2 and NCOA3. Post-translationally, autocleaved. The resulting N-terminal Thr residue of the mature subunit is responsible for the nucleophile proteolytic activity. As to expression, detected in the cytoplasmic lobe of elongated spermatids, in residual bodies, and in the acrosomal cap of round spermatids.

The protein resides in the cytoplasm. It is found in the nucleus. It catalyses the reaction Cleavage of peptide bonds with very broad specificity.. In terms of biological role, the proteasome is a multicatalytic proteinase complex which is characterized by its ability to cleave peptides with Arg, Phe, Tyr, Leu, and Glu adjacent to the leaving group at neutral or slightly basic pH. The proteasome has an ATP-dependent proteolytic activity. This subunit is involved in antigen processing to generate class I binding peptides. The polypeptide is Proteasome subunit beta type-9 (Psmb9) (Rattus norvegicus (Rat)).